A 167-amino-acid polypeptide reads, in one-letter code: HVA22-like protein b (167 aa).

A run of 3 helical transmembrane segments spans residues 18–38, 47–67, and 68–88; these read VIAG…RAIE, QWLT…TFFR, and LLEW…WLVL.

The protein belongs to the DP1 family. In terms of tissue distribution, predominantly expressed in flower buds.

The protein resides in the membrane. In Arabidopsis thaliana (Mouse-ear cress), this protein is HVA22-like protein b (HVA22B).